The chain runs to 129 residues: UPF0102 protein CPS_4433 (129 aa).

It belongs to the UPF0102 family.

The polypeptide is UPF0102 protein CPS_4433 (Colwellia psychrerythraea (strain 34H / ATCC BAA-681) (Vibrio psychroerythus)).